Consider the following 247-residue polypeptide: Adenosylcobinamide-GDP ribazoletransferase (247 aa).

A run of 5 helical transmembrane segments spans residues 34-54 (IITF…VFMV), 59-79 (CGVP…TGGF), 113-133 (GGLA…ELAL), 138-158 (ILAS…LLMY), and 194-214 (VLLP…AIFI).

It belongs to the CobS family. Mg(2+) is required as a cofactor.

The protein resides in the cell inner membrane. The catalysed reaction is alpha-ribazole + adenosylcob(III)inamide-GDP = adenosylcob(III)alamin + GMP + H(+). It carries out the reaction alpha-ribazole 5'-phosphate + adenosylcob(III)inamide-GDP = adenosylcob(III)alamin 5'-phosphate + GMP + H(+). It functions in the pathway cofactor biosynthesis; adenosylcobalamin biosynthesis; adenosylcobalamin from cob(II)yrinate a,c-diamide: step 7/7. Functionally, joins adenosylcobinamide-GDP and alpha-ribazole to generate adenosylcobalamin (Ado-cobalamin). Also synthesizes adenosylcobalamin 5'-phosphate from adenosylcobinamide-GDP and alpha-ribazole 5'-phosphate. This Escherichia coli O7:K1 (strain IAI39 / ExPEC) protein is Adenosylcobinamide-GDP ribazoletransferase.